Consider the following 166-residue polypeptide: Protein C2-DOMAIN ABA-RELATED 11 (166 aa).

The residue at position 1 (M1) is an N-acetylmethionine. Residues 1-103 (MGEPLGLLQV…ISVARLRHVV (103 aa)) form the C2 domain. N-acetylglycine; in Protein C2-DOMAIN ABA-RELATED 11, N-terminally processed is present on G2. R21, D22, D27, D73, K74, D75, and D81 together coordinate Ca(2+).

This sequence belongs to the plant CAR protein family. In terms of assembly, binds to PYR/PYL/RCAR abscisic acid intracellular receptors in an ABA-independent manner, both at the plasma membrane and in the nucleus.

The protein localises to the cell membrane. It is found in the nucleus. Its function is as follows. Stimulates the GTPase/ATPase activities of Obg-like ATPases. Mediates the transient calcium-dependent interaction of PYR/PYL/RCAR abscisic acid (ABA) receptors with the plasma membrane and thus regulates ABA sensitivity. This chain is Protein C2-DOMAIN ABA-RELATED 11, found in Arabidopsis thaliana (Mouse-ear cress).